The following is a 499-amino-acid chain: Pentatricopeptide repeat-containing protein At5g61800 (499 aa).

PPR repeat units follow at residues 78 to 113, 114 to 150, 151 to 181, 182 to 212, 213 to 247, 248 to 282, 283 to 313, 314 to 348, 349 to 379, and 385 to 419; these read STFC…SVPP, DFHT…GLLS, DLFT…NPQR, DVVT…MPLR, DLVS…GLKP, DNVA…RLFI, DSFL…CSDK, TLFT…GIKP, DGVT…MRSL, and EMKH…GGNR. Positions 424 to 499 are type E motif; it reads AWSGLLGGCR…KNVGFSKVLS (76 aa).

This sequence belongs to the PPR family. PCMP-E subfamily.

This is Pentatricopeptide repeat-containing protein At5g61800 (PCMP-E8) from Arabidopsis thaliana (Mouse-ear cress).